Reading from the N-terminus, the 367-residue chain is Molybdopterin synthase catalytic subunit (367 aa).

Substrate-binding positions include 101 to 102, Lys-117, and 124 to 126; these read HR and KKE.

It belongs to the MoaE family. MOCS2B subfamily. As to quaternary structure, heterotetramer; composed of 2 small (Mocs2A) and 2 large (Mocs2B) subunits.

Its subcellular location is the cytoplasm. The catalysed reaction is 2 [molybdopterin-synthase sulfur-carrier protein]-C-terminal-Gly-aminoethanethioate + cyclic pyranopterin phosphate + H2O = molybdopterin + 2 [molybdopterin-synthase sulfur-carrier protein]-C-terminal Gly-Gly + 2 H(+). Its pathway is cofactor biosynthesis; molybdopterin biosynthesis. Catalytic subunit of the molybdopterin synthase complex, a complex that catalyzes the conversion of precursor Z into molybdopterin. Acts by mediating the incorporation of 2 sulfur atoms from thiocarboxylated Mocs2A into precursor Z to generate a dithiolene group. The sequence is that of Molybdopterin synthase catalytic subunit from Drosophila erecta (Fruit fly).